Here is a 208-residue protein sequence, read N- to C-terminus: MAILKAEERTDSRRSSLRRIRQSGYVPGVIYGRNLENKSVALDSIELLKILRAEGKNTIINLDINGDQHSVMVTELQTDPLKDSIVHADFKVVDMEAEMEATVPVNLTGEAEGIKQGGVLQQPLYELSVTAKPKNIPQTIEVDISSLEVNDVLTVGDIPTKGDYSYNHEPDEVVASILPPQKQEETEAESAAQDVEEPEKGTEEEKEE.

Residues 163–208 are disordered; that stretch reads DYSYNHEPDEVVASILPPQKQEETEAESAAQDVEEPEKGTEEEKEE. Over residues 198–208 the composition is skewed to basic and acidic residues; the sequence is PEKGTEEEKEE.

Belongs to the bacterial ribosomal protein bL25 family. CTC subfamily. In terms of assembly, part of the 50S ribosomal subunit; part of the 5S rRNA/L5/L18/L25 subcomplex. Contacts the 5S rRNA. Binds to the 5S rRNA independently of L5 and L18.

Functionally, this is one of the proteins that binds to the 5S RNA in the ribosome where it forms part of the central protuberance. The polypeptide is Large ribosomal subunit protein bL25 (Bacillus licheniformis (strain ATCC 14580 / DSM 13 / JCM 2505 / CCUG 7422 / NBRC 12200 / NCIMB 9375 / NCTC 10341 / NRRL NRS-1264 / Gibson 46)).